An 85-amino-acid polypeptide reads, in one-letter code: Beta-defensin 18 (85 aa).

The N-terminal stretch at 1–23 is a signal peptide; sequence MQSAMKLFFIFLIFVFSVSCGPS. 3 cysteine pairs are disulfide-bonded: Cys-39–Cys-65, Cys-46–Cys-60, and Cys-50–Cys-66.

Belongs to the beta-defensin family.

Its subcellular location is the secreted. Its function is as follows. Has antibacterial activity. This chain is Beta-defensin 18 (Defb18), found in Rattus norvegicus (Rat).